The chain runs to 452 residues: MTRWLFMVACLGIACQGAIVRENSPRNLEKSLNVIHEWKYFDYDFGSEERRQAAIQSGEYDHTKNYPFDVDQWRDKTFVTILRYDGVPSTLNVISGKTGKGGRLLKPYPDWSFAEFKDCSKIVSAFKIAIDKFDRLWVLDSGLVNRTVPVCAPKLHVFDLKTSNHLKQIEIPHDIAVNATTGKGGLVSLAVQAIDLANTLVYMADHKGDALIVYQNADDSFHRLTSNTFDYDPRYAKMTIDGESFTLKNGICGMALSPVTNNLYYSPLASHGLYYVNTAPFMKSQFGENNVQYQGSEDILNTQSLAKAVSKNGVLFVGLVGNSAVGCWNEHQSLQRQNLEMVAQNDRTLQMIAGMKIKEELPHFVGSNKPVKDEYMLVLSNRMQKIVNDDFNFDDVNFRILGANVKELIRNTHCVNNNQNDNIQNTNNQNDNNQKNNKKNANNQKNNNQNDN.

The signal sequence occupies residues 1–17 (MTRWLFMVACLGIACQG). Residues Asn-145 and Asn-178 are each glycosylated (N-linked (GlcNAc...) asparagine). The disordered stretch occupies residues 416–452 (NNNQNDNIQNTNNQNDNNQKNNKKNANNQKNNNQNDN).

N-linked core structure contains mannose (which consists of 8-alpha-mannosyl residues, one beta-mannosyl residue, and chitobiose). As to expression, secreted from the hypopharyngeal glands of the worker honey bee (at protein level); expression peaks at 12 days post eclosion. Expressed in the brains of adult worker bees peaking at 12 days post eclosion (at protein level). Expressed in the spermatheca of adult queen bees (at protein level); Expression levels are higher in mated queens than in virgin queens.

It localises to the secreted. Functionally, highly abundant protein component of royal jelly, a substance produced in the hypopharyngeal gland containing proteins, free amino acids, fatty acids, sugars and other nutrients, which is fed to developing larvae by worker nurse bees. Major royal jelly proteins (MRJPs) are high in essential amino acids and probably have a nutritional function in larval food. All larvae are fed some royal jelly (also known as worker jelly) early in their development but it forms the principal source of nutrition for larvae destined to become queen bees. Produced in the spermatheca of adult queen bees, along with other major royal jelly proteins, where it may act as a nutrient supply for sperm stored by mated queens, or be involved in energy metabolism. The sequence is that of Major royal jelly protein 2 from Apis mellifera (Honeybee).